A 178-amino-acid chain; its full sequence is UPF0228 protein MM_0401 (178 aa).

The protein belongs to the UPF0228 family.

The polypeptide is UPF0228 protein MM_0401 (Methanosarcina mazei (strain ATCC BAA-159 / DSM 3647 / Goe1 / Go1 / JCM 11833 / OCM 88) (Methanosarcina frisia)).